Reading from the N-terminus, the 129-residue chain is Small ribosomal subunit protein uS9 (129 aa).

Residues 104–113 (TRDSRVVERK) are compositionally biased toward basic and acidic residues. The tract at residues 104-129 (TRDSRVVERKKPGKRKARRSRQFSKR) is disordered. The span at 114-129 (KPGKRKARRSRQFSKR) shows a compositional bias: basic residues.

It belongs to the universal ribosomal protein uS9 family.

The protein is Small ribosomal subunit protein uS9 of Sulfurimonas denitrificans (strain ATCC 33889 / DSM 1251) (Thiomicrospira denitrificans (strain ATCC 33889 / DSM 1251)).